The primary structure comprises 113 residues: Integration host factor subunit alpha (113 aa).

A disordered region spans residues 59–80 (GNFQVRDKPPRPGRNPKTGETI).

Belongs to the bacterial histone-like protein family. Heterodimer of an alpha and a beta chain.

This protein is one of the two subunits of integration host factor, a specific DNA-binding protein that functions in genetic recombination as well as in transcriptional and translational control. The protein is Integration host factor subunit alpha of Bordetella bronchiseptica (strain ATCC BAA-588 / NCTC 13252 / RB50) (Alcaligenes bronchisepticus).